A 191-amino-acid polypeptide reads, in one-letter code: uncharacterized protein (191 aa).

The next 4 helical transmembrane spans lie at 12-32 (FAFL…FFTL), 48-68 (LVAL…LTLF), 92-112 (YISV…LLSL), and 168-188 (IFCL…SCAF).

The protein localises to the membrane. This is an uncharacterized protein from Saccharomyces cerevisiae (strain ATCC 204508 / S288c) (Baker's yeast).